The following is a 162-amino-acid chain: Phosphopantetheine adenylyltransferase (162 aa).

Substrate is bound at residue S11. ATP-binding positions include 11 to 12 and H19; that span reads SF. The substrate site is built by K43, V76, and R90. ATP is bound by residues 91–93, E101, and 126–132; these read GLR and HLYISSS.

The protein belongs to the bacterial CoaD family. In terms of assembly, homohexamer. The cofactor is Mg(2+).

The protein localises to the cytoplasm. It catalyses the reaction (R)-4'-phosphopantetheine + ATP + H(+) = 3'-dephospho-CoA + diphosphate. The protein operates within cofactor biosynthesis; coenzyme A biosynthesis; CoA from (R)-pantothenate: step 4/5. Its activity is regulated as follows. Is inhibited by a series of cycloalkyl pyrimidines, which also show suppression of bacterial growth. Functionally, reversibly transfers an adenylyl group from ATP to 4'-phosphopantetheine, yielding dephospho-CoA (dPCoA) and pyrophosphate. The chain is Phosphopantetheine adenylyltransferase from Streptococcus pneumoniae (strain ATCC BAA-255 / R6).